We begin with the raw amino-acid sequence, 268 residues long: GTP cyclohydrolase FolE2 (268 aa).

The protein belongs to the GTP cyclohydrolase IV family.

It carries out the reaction GTP + H2O = 7,8-dihydroneopterin 3'-triphosphate + formate + H(+). It participates in cofactor biosynthesis; 7,8-dihydroneopterin triphosphate biosynthesis; 7,8-dihydroneopterin triphosphate from GTP: step 1/1. In terms of biological role, converts GTP to 7,8-dihydroneopterin triphosphate. This chain is GTP cyclohydrolase FolE2, found in Paraburkholderia xenovorans (strain LB400).